Consider the following 303-residue polypeptide: Quinolinate synthase (303 aa).

The iminosuccinate site is built by histidine 24 and serine 41. Cysteine 86 contributes to the [4Fe-4S] cluster binding site. Residues 112 to 114 (YVN) and serine 129 contribute to the iminosuccinate site. [4Fe-4S] cluster is bound at residue cysteine 172. Residues 198-200 (HPE) and threonine 215 contribute to the iminosuccinate site. Cysteine 260 provides a ligand contact to [4Fe-4S] cluster.

It belongs to the quinolinate synthase family. Type 2 subfamily. [4Fe-4S] cluster serves as cofactor.

It is found in the cytoplasm. It catalyses the reaction iminosuccinate + dihydroxyacetone phosphate = quinolinate + phosphate + 2 H2O + H(+). The protein operates within cofactor biosynthesis; NAD(+) biosynthesis; quinolinate from iminoaspartate: step 1/1. Its function is as follows. Catalyzes the condensation of iminoaspartate with dihydroxyacetone phosphate to form quinolinate. The polypeptide is Quinolinate synthase (Clostridium kluyveri (strain NBRC 12016)).